Reading from the N-terminus, the 234-residue chain is Nuclear transcription factor Y subunit B-6 (234 aa).

2 disordered regions span residues M1 to P21 and M35 to T55. A DNA-binding region spans residues M63–I69. The subunit association domain (SAD) stretch occupies residues I90–I101. The tract at residues N206–Y234 is disordered. Over residues S213 to A222 the composition is skewed to low complexity.

The protein belongs to the NFYB/HAP3 subunit family. Heterotrimeric transcription factor composed of three components, NF-YA, NF-YB and NF-YC. NF-YB and NF-YC must interact and dimerize for NF-YA association and DNA binding. Interacts with PRN1. Binds directly with DPB3-1. In terms of tissue distribution, expressed in roots, flowers and developing siliques. Present in etiolated seedlings.

Its subcellular location is the nucleus. Functionally, component of the NF-Y/HAP transcription factor complex. The NF-Y complex stimulates the transcription of various genes by recognizing and binding to a CCAAT motif in promoters. Plays a role in the regulation of the embryogenesis. Involved in the abscisic acid (ABA) signaling pathway. The chain is Nuclear transcription factor Y subunit B-6 from Arabidopsis thaliana (Mouse-ear cress).